The chain runs to 395 residues: Calcium sensing receptor, chloroplastic (395 aa).

A compositionally biased stretch (low complexity) spans 1–12 (MAPVPVSVSATL). The disordered stretch occupies residues 1 to 27 (MAPVPVSVSATLAPPPAAPPKTTSRSW). The N-terminal 39 residues, 1-39 (MAPVPVSVSATLAPPPAAPPKTTSRSWERRAPADAAFAA), are a transit peptide targeting the chloroplast. Over 40 to 182 (ASSVAGSAAL…TITSLGPEDY (143 aa)) the chain is Lumenal, thylakoid. A helical membrane pass occupies residues 183–203 (VVAAGXAFLAYLLVPPVWSLV). Over 204-395 (SSSLRGYKGD…TRKLLPGGVD (192 aa)) the chain is Stromal. The 122-residue stretch at 224-345 (TTQGYVLIDV…WAQSRLGTDS (122 aa)) folds into the Rhodanese domain. Threonine 377 is modified (phosphothreonine).

Phosphorylated in both bundle sheath and mesophyll cells, under both low and high light regimes (70 vs 900 umol photons/m-2/s).

It localises to the plastid. The protein localises to the chloroplast thylakoid membrane. Its function is as follows. Modulates cytoplasmic Ca(2+) concentration and is crucial for proper stomatal regulation in response to elevated levels of external Ca(2+). May function by regulating concentrations of inositol 1,4,5-trisphosphate (IP3), which in turn triggers release of Ca(2+) from internal stores. May play a role in de-etiolation. This Zea mays (Maize) protein is Calcium sensing receptor, chloroplastic.